A 550-amino-acid chain; its full sequence is Dihydroxy-acid dehydratase (550 aa).

Mg(2+) is bound at residue Asp78. Residue Cys119 coordinates [2Fe-2S] cluster. Mg(2+) is bound by residues Asp120 and Lys121. Lys121 carries the post-translational modification N6-carboxylysine. Cys191 lines the [2Fe-2S] cluster pocket. A Mg(2+)-binding site is contributed by Glu440. Ser466 acts as the Proton acceptor in catalysis.

It belongs to the IlvD/Edd family. In terms of assembly, homodimer. Requires [2Fe-2S] cluster as cofactor. It depends on Mg(2+) as a cofactor.

The enzyme catalyses (2R)-2,3-dihydroxy-3-methylbutanoate = 3-methyl-2-oxobutanoate + H2O. It catalyses the reaction (2R,3R)-2,3-dihydroxy-3-methylpentanoate = (S)-3-methyl-2-oxopentanoate + H2O. It participates in amino-acid biosynthesis; L-isoleucine biosynthesis; L-isoleucine from 2-oxobutanoate: step 3/4. The protein operates within amino-acid biosynthesis; L-valine biosynthesis; L-valine from pyruvate: step 3/4. Functions in the biosynthesis of branched-chain amino acids. Catalyzes the dehydration of (2R,3R)-2,3-dihydroxy-3-methylpentanoate (2,3-dihydroxy-3-methylvalerate) into 2-oxo-3-methylpentanoate (2-oxo-3-methylvalerate) and of (2R)-2,3-dihydroxy-3-methylbutanoate (2,3-dihydroxyisovalerate) into 2-oxo-3-methylbutanoate (2-oxoisovalerate), the penultimate precursor to L-isoleucine and L-valine, respectively. This is Dihydroxy-acid dehydratase from Methanococcus maripaludis (strain C6 / ATCC BAA-1332).